We begin with the raw amino-acid sequence, 660 residues long: V-type ATP synthase subunit I (660 aa).

7 helical membrane-spanning segments follow: residues Phe-312–Phe-332, Ile-362–Phe-382, Phe-453–Gly-473, Ile-485–Val-505, Gly-520–Ile-540, Val-560–Phe-580, and Ser-593–Ile-613.

The protein belongs to the V-ATPase 116 kDa subunit family.

The protein localises to the cell membrane. In terms of biological role, produces ATP from ADP in the presence of a proton gradient across the membrane. The chain is V-type ATP synthase subunit I (atpI) from Chlamydia pneumoniae (Chlamydophila pneumoniae).